The chain runs to 230 residues: Large ribosomal subunit protein uL1 (230 aa).

Belongs to the universal ribosomal protein uL1 family. In terms of assembly, part of the 50S ribosomal subunit.

Its function is as follows. Binds directly to 23S rRNA. The L1 stalk is quite mobile in the ribosome, and is involved in E site tRNA release. In terms of biological role, protein L1 is also a translational repressor protein, it controls the translation of the L11 operon by binding to its mRNA. The sequence is that of Large ribosomal subunit protein uL1 from Nitrosospira multiformis (strain ATCC 25196 / NCIMB 11849 / C 71).